Here is a 205-residue protein sequence, read N- to C-terminus: Proteasome subunit beta type-3 (205 aa).

This sequence belongs to the peptidase T1B family. As to quaternary structure, the 26S proteasome consists of a 20S proteasome core and two 19S regulatory subunits. The 20S proteasome core is composed of 28 subunits that are arranged in four stacked rings, resulting in a barrel-shaped structure. The two end rings are each formed by seven alpha subunits, and the two central rings are each formed by seven beta subunits. The catalytic chamber with the active sites is on the inside of the barrel.

The protein localises to the cytoplasm. It is found in the nucleus. Functionally, non-catalytic component of the proteasome, a multicatalytic proteinase complex which is characterized by its ability to cleave peptides with Arg, Phe, Tyr, Leu, and Glu adjacent to the leaving group at neutral or slightly basic pH. The proteasome has an ATP-dependent proteolytic activity. The chain is Proteasome subunit beta type-3 (psmb3) from Oncorhynchus mykiss (Rainbow trout).